A 337-amino-acid polypeptide reads, in one-letter code: Holliday junction branch migration complex subunit RuvB (337 aa).

Positions 1–181 are large ATPase domain (RuvB-L); it reads MQRLVEIERF…FGMNFRMQFY (181 aa). ATP-binding positions include Leu20, Arg21, Gly62, Lys65, Thr66, Thr67, 128–130, Arg171, Tyr181, and Arg218; that span reads EDF. Position 66 (Thr66) interacts with Mg(2+). A small ATPAse domain (RuvB-S) region spans residues 182–252; it reads SPEELSKIIS…RAQYALDELG (71 aa). A head domain (RuvB-H) region spans residues 255-337; sequence SYGFDEMDIK…MPALDDGGLF (83 aa). DNA contacts are provided by Arg309 and Arg314.

It belongs to the RuvB family. In terms of assembly, homohexamer. Forms an RuvA(8)-RuvB(12)-Holliday junction (HJ) complex. HJ DNA is sandwiched between 2 RuvA tetramers; dsDNA enters through RuvA and exits via RuvB. An RuvB hexamer assembles on each DNA strand where it exits the tetramer. Each RuvB hexamer is contacted by two RuvA subunits (via domain III) on 2 adjacent RuvB subunits; this complex drives branch migration. In the full resolvosome a probable DNA-RuvA(4)-RuvB(12)-RuvC(2) complex forms which resolves the HJ.

It is found in the cytoplasm. The enzyme catalyses ATP + H2O = ADP + phosphate + H(+). The RuvA-RuvB-RuvC complex processes Holliday junction (HJ) DNA during genetic recombination and DNA repair, while the RuvA-RuvB complex plays an important role in the rescue of blocked DNA replication forks via replication fork reversal (RFR). RuvA specifically binds to HJ cruciform DNA, conferring on it an open structure. The RuvB hexamer acts as an ATP-dependent pump, pulling dsDNA into and through the RuvAB complex. RuvB forms 2 homohexamers on either side of HJ DNA bound by 1 or 2 RuvA tetramers; 4 subunits per hexamer contact DNA at a time. Coordinated motions by a converter formed by DNA-disengaged RuvB subunits stimulates ATP hydrolysis and nucleotide exchange. Immobilization of the converter enables RuvB to convert the ATP-contained energy into a lever motion, pulling 2 nucleotides of DNA out of the RuvA tetramer per ATP hydrolyzed, thus driving DNA branch migration. The RuvB motors rotate together with the DNA substrate, which together with the progressing nucleotide cycle form the mechanistic basis for DNA recombination by continuous HJ branch migration. Branch migration allows RuvC to scan DNA until it finds its consensus sequence, where it cleaves and resolves cruciform DNA. In Sulfurimonas denitrificans (strain ATCC 33889 / DSM 1251) (Thiomicrospira denitrificans (strain ATCC 33889 / DSM 1251)), this protein is Holliday junction branch migration complex subunit RuvB.